A 231-amino-acid polypeptide reads, in one-letter code: Lipoprotein-releasing system ATP-binding protein LolD 2 (231 aa).

An ABC transporter domain is found at 6-230 (VEARSLSKSF…DGRLVGQDPA (225 aa)). Residue 42–49 (GPSGSGKS) coordinates ATP.

Belongs to the ABC transporter superfamily. Lipoprotein translocase (TC 3.A.1.125) family. As to quaternary structure, the complex is composed of two ATP-binding proteins (LolD) and two transmembrane proteins (LolC and LolE).

The protein localises to the cell inner membrane. Its function is as follows. Part of the ABC transporter complex LolCDE involved in the translocation of mature outer membrane-directed lipoproteins, from the inner membrane to the periplasmic chaperone, LolA. Responsible for the formation of the LolA-lipoprotein complex in an ATP-dependent manner. The polypeptide is Lipoprotein-releasing system ATP-binding protein LolD 2 (Rhodospirillum rubrum (strain ATCC 11170 / ATH 1.1.1 / DSM 467 / LMG 4362 / NCIMB 8255 / S1)).